The sequence spans 161 residues: Transcription elongation factor GreA (161 aa).

The stretch at 45–72 (NAEYHSAKEKLKLIDIQIAELNAVISKA) forms a coiled coil.

Belongs to the GreA/GreB family.

Functionally, necessary for efficient RNA polymerase transcription elongation past template-encoded arresting sites. The arresting sites in DNA have the property of trapping a certain fraction of elongating RNA polymerases that pass through, resulting in locked ternary complexes. Cleavage of the nascent transcript by cleavage factors such as GreA or GreB allows the resumption of elongation from the new 3'terminus. GreA releases sequences of 2 to 3 nucleotides. The polypeptide is Transcription elongation factor GreA (Aliarcobacter butzleri (strain RM4018) (Arcobacter butzleri)).